The sequence spans 200 residues: Probable nicotinate-nucleotide adenylyltransferase (200 aa).

This sequence belongs to the NadD family.

It catalyses the reaction nicotinate beta-D-ribonucleotide + ATP + H(+) = deamido-NAD(+) + diphosphate. The protein operates within cofactor biosynthesis; NAD(+) biosynthesis; deamido-NAD(+) from nicotinate D-ribonucleotide: step 1/1. Functionally, catalyzes the reversible adenylation of nicotinate mononucleotide (NaMN) to nicotinic acid adenine dinucleotide (NaAD). In Clostridium tetani (strain Massachusetts / E88), this protein is Probable nicotinate-nucleotide adenylyltransferase.